We begin with the raw amino-acid sequence, 476 residues long: Efflux pump atB (476 aa).

The disordered stretch occupies residues 1-38 (MAPQLAGSSHSSSASDQAHRQSSDPALESGSDTHVGSI). A run of 10 helical transmembrane segments spans residues 69–89 (LIVAIVSSTRLGLSPMILAPL), 96–116 (KPVYVVSMFFFVVWIIPCAVA), 127–147 (FFNGFAGAAFLSVAGGTVGDL), 186–206 (WSFYILLIWAFAQWVSISLLV), 264–284 (LLLCLFCSVLLGVLYLFFGAF), 294–314 (FNLWQVGLSFLGITVGMIIGI), 347–367 (LPPAVGGAPLVTIGLLWFAWT), 372–392 (VHWIVPIIGSGIFGAGVIMIF), 403–425 (YPLYAASALAANSFSRSMFAAAF), and 440–460 (WAGFLLAMITLLLAPFPYIFY).

Belongs to the major facilitator superfamily.

The protein resides in the cell membrane. Functionally, efflux pump that might be required for efficient secretion of terreic acid. The chain is Efflux pump atB from Aspergillus terreus (strain NIH 2624 / FGSC A1156).